A 699-amino-acid chain; its full sequence is Triacylglycerol hydrolase DDHD2 (699 aa).

Positions 1-11 are enriched in polar residues; the sequence is MSSGESHQEQL. Residues 1 to 25 are disordered; that stretch reads MSSGESHQEQLSQSDPSPSPNSCSS. The span at 12-25 shows a compositional bias: low complexity; the sequence is SQSDPSPSPNSCSS. In terms of domain architecture, WWE spans 30–112; sequence DMDASSSYEP…WDELPSEVRR (83 aa). S351 (nucleophile) is an active-site residue. The region spanning 383 to 445 is the SAM domain; it reads DRGDASTLEE…KILNHFSARK (63 aa). S447 carries the phosphoserine modification. The region spanning 484 to 688 is the DDHD domain; that stretch reads LNYKPEIFFA…VLLVLKEIYQ (205 aa). Positions 599 to 635 are disordered; sequence QASETAEETEAEPESSSEKSNEANTEEPPVEVKEEAP. Residues 603-613 show a composition bias toward acidic residues; it reads TAEETEAEPES.

The protein belongs to the PA-PLA1 family. In terms of assembly, forms homooligomers and, to a much smaller extent, heterooligomers with DDHD1.

The protein localises to the cytoplasm. The protein resides in the cytosol. It localises to the endoplasmic reticulum-Golgi intermediate compartment. It is found in the golgi apparatus. Its subcellular location is the cis-Golgi network. The catalysed reaction is a triacylglycerol + H2O = a diacylglycerol + a fatty acid + H(+). It carries out the reaction a diacylglycerol + H2O = a monoacylglycerol + a fatty acid + H(+). It catalyses the reaction a 1,3-diacylglycerol + H2O = a 1-acylglycerol + a fatty acid + H(+). The enzyme catalyses a 1-acylglycerol + H2O = glycerol + a fatty acid + H(+). The catalysed reaction is 1,2,3-tri-(9Z-octadecenoyl)-glycerol + H2O = di-(9Z)-octadecenoylglycerol + (9Z)-octadecenoate + H(+). It carries out the reaction di-(9Z)-octadecenoylglycerol + H2O = (9Z-octadecenoyl)-glycerol + (9Z)-octadecenoate + H(+). It catalyses the reaction 1,3-di-(9Z-octadecenoyl)-glycerol + H2O = 1-(9Z-octadecenoyl)-glycerol + (9Z)-octadecenoate + H(+). The enzyme catalyses trihexadecanoylglycerol + H2O = dihexadecanoylglycerol + hexadecanoate + H(+). The catalysed reaction is 1,2-di-(9Z-octadecenoyl)-sn-glycero-3-phosphocholine + H2O = (9Z-octadecenoyl)-sn-glycero-3-phosphocholine + (9Z)-octadecenoate + H(+). It carries out the reaction 1-(9Z-octadecenoyl)-glycerol + H2O = glycerol + (9Z)-octadecenoate + H(+). It catalyses the reaction 1,2-di-(9Z-octadecenoyl)-sn-glycero-3-phosphate + H2O = 2-(9Z-octadecenoyl)-sn-glycero-3-phosphate + (9Z)-octadecenoate + H(+). The enzyme catalyses 1-hexadecanoyl-2-(9Z-octadecenoyl)-sn-glycero-3-phosphate + H2O = 2-(9Z-octadecenoyl)-sn-glycero-3-phosphate + hexadecanoate + H(+). The catalysed reaction is 1-hexadecanoyl-2-(9Z-octadecenoyl)-sn-glycero-3-phosphoethanolamine + H2O = 2-(9Z-octadecenoyl)-sn-glycero-3-phosphoethanolamine + hexadecanoate + H(+). It carries out the reaction 1-hexadecanoyl-2-(9Z-octadecenoyl)-sn-glycero-3-phospho-L-serine + H2O = 2-(9Z-octadecenoyl)-sn-glycero-3-phospho-L-serine + hexadecanoate + H(+). It catalyses the reaction 1-hexadecanoyl-2-(9Z-octadecenoyl)-sn-glycero-3-phosphocholine + H2O = 2-(9Z-octadecenoyl)-sn-glycero-3-phosphocholine + hexadecanoate + H(+). Diacylglycerol (DAG) and triacylglycerol (TAG) lipase that is required for proper lipid homeostasis in the central nervous system. It cooperates with PNPLA2/ATGL in neuronal TAG catabolism and hydrolyzes sn-1,3-DAG downstream of PNPLA2/ATGL. In vitro, also acts as a phospholipase that hydrolyzes preferentially phosphatidic acids, including 1,2-dioleoyl-sn-phosphatidic acid, phosphatidylcholine and phosphatidylethanolamine. Specifically binds to phosphatidylinositol 3-phosphate (PI(3)P), phosphatidylinositol 4-phosphate (PI(4)P), phosphatidylinositol 5-phosphate (PI(5)P) and possibly phosphatidylinositol 4,5-bisphosphate (PI(4,5)P2). May be involved in the maintenance of the endoplasmic reticulum and/or Golgi structures. May regulate the transport between Golgi apparatus and plasma membrane. This Mus musculus (Mouse) protein is Triacylglycerol hydrolase DDHD2.